Reading from the N-terminus, the 82-residue chain is RNA-binding protein Hfq (82 aa).

The Sm domain maps to 10–70 (DAFLNQVRKD…ISTVAPLRPI (61 aa)).

This sequence belongs to the Hfq family. Homohexamer.

Its function is as follows. RNA chaperone that binds small regulatory RNA (sRNAs) and mRNAs to facilitate mRNA translational regulation in response to envelope stress, environmental stress and changes in metabolite concentrations. Also binds with high specificity to tRNAs. The chain is RNA-binding protein Hfq from Syntrophomonas wolfei subsp. wolfei (strain DSM 2245B / Goettingen).